Reading from the N-terminus, the 566-residue chain is Arginine--tRNA ligase (566 aa).

The 'HIGH' region signature appears at 123–133; the sequence is PNIAKPFHIGH.

The protein belongs to the class-I aminoacyl-tRNA synthetase family. In terms of assembly, monomer.

Its subcellular location is the cytoplasm. It carries out the reaction tRNA(Arg) + L-arginine + ATP = L-arginyl-tRNA(Arg) + AMP + diphosphate. This Clostridioides difficile (strain 630) (Peptoclostridium difficile) protein is Arginine--tRNA ligase.